Here is a 710-residue protein sequence, read N- to C-terminus: Polyribonucleotide nucleotidyltransferase (710 aa).

Positions 486 and 492 each coordinate Mg(2+). One can recognise a KH domain in the interval 553 to 612 (PRIHTIKISVDKIKDVIGKGGSVIRALTEETGTTIEIEDDGTVKIAATDGDKAKFAIRRI). Positions 622 to 690 (GRIYNGKVTR…RQGRVRLSIK (69 aa)) constitute an S1 motif domain. Residues 690-710 (KEAGEQAQPEAEAVPAAPEAE) form a disordered region. Over residues 694–710 (EQAQPEAEAVPAAPEAE) the composition is skewed to low complexity.

The protein belongs to the polyribonucleotide nucleotidyltransferase family. In terms of assembly, component of the RNA degradosome, which is a multiprotein complex involved in RNA processing and mRNA degradation. It depends on Mg(2+) as a cofactor.

Its subcellular location is the cytoplasm. The catalysed reaction is RNA(n+1) + phosphate = RNA(n) + a ribonucleoside 5'-diphosphate. Functionally, involved in mRNA degradation. Catalyzes the phosphorolysis of single-stranded polyribonucleotides processively in the 3'- to 5'-direction. In Erwinia tasmaniensis (strain DSM 17950 / CFBP 7177 / CIP 109463 / NCPPB 4357 / Et1/99), this protein is Polyribonucleotide nucleotidyltransferase.